Here is a 197-residue protein sequence, read N- to C-terminus: Holliday junction branch migration complex subunit RuvA (197 aa).

A domain I region spans residues Met1–Arg63. Positions Ser64–Val142 are domain II. A flexible linker region spans residues Ala143–Ser147. The domain III stretch occupies residues Ala148–Lys197.

Belongs to the RuvA family. As to quaternary structure, homotetramer. Forms an RuvA(8)-RuvB(12)-Holliday junction (HJ) complex. HJ DNA is sandwiched between 2 RuvA tetramers; dsDNA enters through RuvA and exits via RuvB. An RuvB hexamer assembles on each DNA strand where it exits the tetramer. Each RuvB hexamer is contacted by two RuvA subunits (via domain III) on 2 adjacent RuvB subunits; this complex drives branch migration. In the full resolvosome a probable DNA-RuvA(4)-RuvB(12)-RuvC(2) complex forms which resolves the HJ.

Its subcellular location is the cytoplasm. In terms of biological role, the RuvA-RuvB-RuvC complex processes Holliday junction (HJ) DNA during genetic recombination and DNA repair, while the RuvA-RuvB complex plays an important role in the rescue of blocked DNA replication forks via replication fork reversal (RFR). RuvA specifically binds to HJ cruciform DNA, conferring on it an open structure. The RuvB hexamer acts as an ATP-dependent pump, pulling dsDNA into and through the RuvAB complex. HJ branch migration allows RuvC to scan DNA until it finds its consensus sequence, where it cleaves and resolves the cruciform DNA. In Streptococcus pneumoniae (strain Hungary19A-6), this protein is Holliday junction branch migration complex subunit RuvA.